The primary structure comprises 525 residues: GMP synthase [glutamine-hydrolyzing] (525 aa).

A Glutamine amidotransferase type-1 domain is found at 8-207 (KILILDFGSQ…ALEICGCPAN (200 aa)). The active-site Nucleophile is C85. Active-site residues include H181 and E183. The 193-residue stretch at 208–400 (WKPSSIIEDA…LGLPYDMLYR (193 aa)) folds into the GMPS ATP-PPase domain. Residue 235–241 (SGGVDSS) coordinates ATP.

As to quaternary structure, homodimer.

The enzyme catalyses XMP + L-glutamine + ATP + H2O = GMP + L-glutamate + AMP + diphosphate + 2 H(+). The protein operates within purine metabolism; GMP biosynthesis; GMP from XMP (L-Gln route): step 1/1. Catalyzes the synthesis of GMP from XMP. The sequence is that of GMP synthase [glutamine-hydrolyzing] from Shewanella pealeana (strain ATCC 700345 / ANG-SQ1).